Here is a 235-residue protein sequence, read N- to C-terminus: Small ribosomal subunit protein uS3 (235 aa).

Residues 39-107 (VRKFLNKELA…PAQINIAEVK (69 aa)) form the KH type-2 domain. The tract at residues 215–235 (AQPEQQPADKPKKAPRGKGRK) is disordered.

Belongs to the universal ribosomal protein uS3 family. Part of the 30S ribosomal subunit. Forms a tight complex with proteins S10 and S14.

Functionally, binds the lower part of the 30S subunit head. Binds mRNA in the 70S ribosome, positioning it for translation. The sequence is that of Small ribosomal subunit protein uS3 from Pasteurella multocida (strain Pm70).